The chain runs to 483 residues: Uroporphyrinogen-III C-methyltransferase (483 aa).

It belongs to the precorrin methyltransferase family.

The enzyme catalyses uroporphyrinogen III + 2 S-adenosyl-L-methionine = precorrin-2 + 2 S-adenosyl-L-homocysteine + H(+). The chain is Uroporphyrinogen-III C-methyltransferase (nasF) from Bacillus subtilis (strain 168).